Consider the following 185-residue polypeptide: Pyruvate/ketoisovalerate oxidoreductases common subunit gamma (185 aa).

Heterotetramer of one alpha, one beta, one delta and one gamma chain.

It catalyses the reaction 2 oxidized [2Fe-2S]-[ferredoxin] + pyruvate + CoA = 2 reduced [2Fe-2S]-[ferredoxin] + acetyl-CoA + CO2 + H(+). The catalysed reaction is 3-methyl-2-oxobutanoate + 2 oxidized [2Fe-2S]-[ferredoxin] + CoA = 2-methylpropanoyl-CoA + 2 reduced [2Fe-2S]-[ferredoxin] + CO2 + H(+). In Thermococcus litoralis (strain ATCC 51850 / DSM 5473 / JCM 8560 / NS-C), this protein is Pyruvate/ketoisovalerate oxidoreductases common subunit gamma (porG).